The sequence spans 283 residues: Thymidylate synthase (283 aa).

Arg22 contacts dUMP. Cys160 (nucleophile) is an active-site residue. Residues 180–183 (RSCD), Asn191, and 221–223 (HIY) each bind dUMP. Asp183 is a binding site for (6R)-5,10-methylene-5,6,7,8-tetrahydrofolate. Ser282 contributes to the (6R)-5,10-methylene-5,6,7,8-tetrahydrofolate binding site.

The protein belongs to the thymidylate synthase family. Bacterial-type ThyA subfamily. As to quaternary structure, homodimer.

The protein localises to the cytoplasm. It catalyses the reaction dUMP + (6R)-5,10-methylene-5,6,7,8-tetrahydrofolate = 7,8-dihydrofolate + dTMP. The protein operates within pyrimidine metabolism; dTTP biosynthesis. Functionally, catalyzes the reductive methylation of 2'-deoxyuridine-5'-monophosphate (dUMP) to 2'-deoxythymidine-5'-monophosphate (dTMP) while utilizing 5,10-methylenetetrahydrofolate (mTHF) as the methyl donor and reductant in the reaction, yielding dihydrofolate (DHF) as a by-product. This enzymatic reaction provides an intracellular de novo source of dTMP, an essential precursor for DNA biosynthesis. The protein is Thymidylate synthase of Pseudoalteromonas translucida (strain TAC 125).